The following is a 307-amino-acid chain: tRNA dimethylallyltransferase (307 aa).

9 to 16 (GATGTGKS) is an ATP binding site. Residue 11–16 (TGTGKS) coordinates substrate.

Belongs to the IPP transferase family. As to quaternary structure, monomer. Requires Mg(2+) as cofactor.

It catalyses the reaction adenosine(37) in tRNA + dimethylallyl diphosphate = N(6)-dimethylallyladenosine(37) in tRNA + diphosphate. In terms of biological role, catalyzes the transfer of a dimethylallyl group onto the adenine at position 37 in tRNAs that read codons beginning with uridine, leading to the formation of N6-(dimethylallyl)adenosine (i(6)A). The chain is tRNA dimethylallyltransferase from Clavibacter sepedonicus (Clavibacter michiganensis subsp. sepedonicus).